We begin with the raw amino-acid sequence, 248 residues long: PF03932 family protein CutC (248 aa).

Belongs to the CutC family.

Its subcellular location is the cytoplasm. The sequence is that of PF03932 family protein CutC from Photorhabdus laumondii subsp. laumondii (strain DSM 15139 / CIP 105565 / TT01) (Photorhabdus luminescens subsp. laumondii).